The sequence spans 188 residues: dCTP deaminase (188 aa).

DCTP is bound by residues 111-116 (KSTYAR), 135-137 (TLE), Q156, Y170, K179, and Q180. E137 functions as the Proton donor/acceptor in the catalytic mechanism.

This sequence belongs to the dCTP deaminase family. Homotrimer.

It carries out the reaction dCTP + H2O + H(+) = dUTP + NH4(+). The protein operates within pyrimidine metabolism; dUMP biosynthesis; dUMP from dCTP (dUTP route): step 1/2. Its function is as follows. Catalyzes the deamination of dCTP to dUTP. The chain is dCTP deaminase from Rickettsia typhi (strain ATCC VR-144 / Wilmington).